Here is a 1162-residue protein sequence, read N- to C-terminus: Spike glycoprotein (1162 aa).

Positions 1–18 are cleaved as a signal peptide; the sequence is MLVTPLLLVTLLCALCSA. Residues 19 to 1095 are Extracellular-facing; that stretch reads ALYDSSSYVY…LKTYIKWPWY (1077 aa). N-linked (GlcNAc...) asparagine; by host glycosylation is found at N51, N77, N103, N144, N163, N178, N212, N237, N247, N264, N271, N276, N306, N425, N447, N513, N530, N579, N591, N669, N676, and N714. Residues 769–874 are heptad repeat 1 (HR1); that stretch reads IPFATQLQAR…QVDRLITGRL (106 aa). The stretch at 822–866 forms a coiled coil; it reads QDVVNKQSAILTETMASLNKNFGAISSVIQEIYLQLDAIQANAQV. N-linked (GlcNAc...) asparagine; by host glycosylation is found at N947, N960, N979, N1014, N1051, N1058, and N1074. A heptad repeat 2 (HR2) region spans residues 1024–1105; that stretch reads NDDFDFDDEL…VWLAIAFATI (82 aa). Residues 1055-1083 adopt a coiled-coil conformation; sequence PVLNITYDIDKIEEVIKGLNDSLIDLETL. The chain crosses the membrane as a helical span at residues 1096 to 1116; the sequence is VWLAIAFATIIFILILGWVFF. Topologically, residues 1117–1162 are cytoplasmic; the sequence is MTGCCGCCCGCFGIIPLMSKCGKKSSYYTTFDNDVVTEQYRPKKSV. Positions 1159-1162 match the Di-lysine motif motif; the sequence is KKSV.

It belongs to the gammacoronaviruses spike protein family. Homotrimer; each monomer consists of a S1 and a S2 subunit. The resulting peplomers protrude from the virus surface as spikes. In terms of processing, specific enzymatic cleavages in vivo yield mature proteins. The precursor is processed into S1 and S2 by host cell furin or furin-like protease to yield the mature S1 and S2 proteins. The cleavage site between S1 and S2 requires the optimal sequence [KR]-X-[KR]-R. Additionally, a second cleavage leads to the release of a fusion peptide after viral attachment to host cell receptor.

The protein resides in the virion membrane. Its subcellular location is the host endoplasmic reticulum-Golgi intermediate compartment membrane. Functionally, attaches the virion to the host cell membrane by interacting with sialic acids, initiating the infection. In terms of biological role, mediates fusion of the virion and cellular membranes by acting as a class I viral fusion protein. Under the current model, the protein has at least 3 conformational states: pre-fusion native state, pre-hairpin intermediate state, and post-fusion hairpin state. During viral and target cell membrane fusion, the coiled coil regions (heptad repeats) assume a trimer-of-hairpins structure, positioning the fusion peptide in close proximity to the C-terminal region of the ectodomain. The formation of this structure appears to drive apposition and subsequent fusion of viral and target cell membranes. Acts as a viral fusion peptide after S2 cleavage occurring upon virus endocytosis. This Avian infectious bronchitis virus (strain KB8523) (IBV) protein is Spike glycoprotein.